Reading from the N-terminus, the 128-residue chain is Holo-[acyl-carrier-protein] synthase (128 aa).

Mg(2+)-binding residues include Asp-9 and Glu-60.

It belongs to the P-Pant transferase superfamily. AcpS family. Requires Mg(2+) as cofactor.

Its subcellular location is the cytoplasm. It carries out the reaction apo-[ACP] + CoA = holo-[ACP] + adenosine 3',5'-bisphosphate + H(+). Its function is as follows. Transfers the 4'-phosphopantetheine moiety from coenzyme A to a Ser of acyl-carrier-protein. This Buchnera aphidicola subsp. Baizongia pistaciae (strain Bp) protein is Holo-[acyl-carrier-protein] synthase.